Here is a 125-residue protein sequence, read N- to C-terminus: Small ribosomal subunit protein uS13 (125 aa).

Residues 92-125 (RRSLPVRGQRTQTNARTRKGKRKTVAGKKKATKK) form a disordered region. The span at 107-125 (RTRKGKRKTVAGKKKATKK) shows a compositional bias: basic residues.

Belongs to the universal ribosomal protein uS13 family. As to quaternary structure, part of the 30S ribosomal subunit. Forms a loose heterodimer with protein S19. Forms two bridges to the 50S subunit in the 70S ribosome.

Its function is as follows. Located at the top of the head of the 30S subunit, it contacts several helices of the 16S rRNA. In the 70S ribosome it contacts the 23S rRNA (bridge B1a) and protein L5 of the 50S subunit (bridge B1b), connecting the 2 subunits; these bridges are implicated in subunit movement. Contacts the tRNAs in the A and P-sites. This chain is Small ribosomal subunit protein uS13, found in Chlorobium phaeobacteroides (strain DSM 266 / SMG 266 / 2430).